Consider the following 455-residue polypeptide: Probable xyloglucan galactosyltransferase GT17 (455 aa).

The Cytoplasmic segment spans residues methionine 1–threonine 34. Residues leucine 35–phenylalanine 55 form a helical; Signal-anchor for type II membrane protein membrane-spanning segment. Topologically, residues threonine 56–leucine 455 are lumenal. 5 N-linked (GlcNAc...) asparagine glycosylation sites follow: asparagine 70, asparagine 169, asparagine 230, asparagine 390, and asparagine 426.

Belongs to the glycosyltransferase 47 family. As to expression, expressed in roots and hypocotyls.

It is found in the golgi apparatus membrane. Functions in xyloglucan synthesis by adding side chains to the xylosylated glucan backbone. Involved in the galactosylation of hemicellulose xyloglucan. In Arabidopsis thaliana (Mouse-ear cress), this protein is Probable xyloglucan galactosyltransferase GT17.